Reading from the N-terminus, the 532-residue chain is MEQARALLQGKTVTIMGLGVHGGGCAAACFCAEAGARLTVTDLRNADALTPSLKRLRAYPSIRFTLGEHRLEDFENAHVVIKNPIVKGAHNIYLSAAQRAGARIETDISLFLRLSPAPLLAVSGSKGKSSTASALCYSLRALGFPAFLGGNSTVSPLEFVRHTTPATPVVLELSSWQLADLRAVDAQDHTVHHAGLLRPEIAIMTPIMADHQNWYADMESYVADKQVLYAHQGTHDTLLCNADDGWGPRFACEAQKNGVRVFWYTAQSPETACRACTPRLMERALWRATDGTYWARFAEGDRACMLIPPQLHVPGRVLQTQVASAALAALLFAQRHSLPPSSCPPCFCAHSHSPAYANHASPPDYACPSAHSPFQEHTRRLAQALESYTGIEHRLEFFYEKGGLRFYNDSASTVPEATIAALEAFDESVVLIVGGTDKNADYQPLAQAAAKAHALYLLAGSATARLQPLLHAAQVPFYGPFTSLEVLLQDLRARQKSPGVIVFSPGAASFELFAHEFERGTTFKSQVRIIFE.

ATP is bound at residue 124 to 130 (GSKGKSS).

This sequence belongs to the MurCDEF family.

The protein resides in the cytoplasm. The catalysed reaction is UDP-N-acetyl-alpha-D-muramoyl-L-alanine + D-glutamate + ATP = UDP-N-acetyl-alpha-D-muramoyl-L-alanyl-D-glutamate + ADP + phosphate + H(+). It functions in the pathway cell wall biogenesis; peptidoglycan biosynthesis. Its function is as follows. Cell wall formation. Catalyzes the addition of glutamate to the nucleotide precursor UDP-N-acetylmuramoyl-L-alanine (UMA). The polypeptide is UDP-N-acetylmuramoylalanine--D-glutamate ligase (murD) (Treponema pallidum (strain Nichols)).